We begin with the raw amino-acid sequence, 35 residues long: Dolichyl-diphosphooligosaccharide--protein glycosyltransferase subunit 4C (35 aa).

Residues 1-8 (MFDDQDLG) lie on the Lumenal side of the membrane. A helical membrane pass occupies residues 9–29 (FFANFLGIFIFILVIAYHFVM). Residues 30 to 35 (ADPKFE) are Cytoplasmic-facing.

This sequence belongs to the OST4 family. Component of the oligosaccharyltransferase (OST) complex.

It localises to the endoplasmic reticulum membrane. Functionally, subunit of the oligosaccharyl transferase (OST) complex that catalyzes the initial transfer of a defined glycan (Glc(3)Man(9)GlcNAc(2) in eukaryotes) from the lipid carrier dolichol-pyrophosphate to an asparagine residue within an Asn-X-Ser/Thr consensus motif in nascent polypeptide chains, the first step in protein N-glycosylation. N-glycosylation occurs cotranslationally and the complex associates with the Sec61 complex at the channel-forming translocon complex that mediates protein translocation across the endoplasmic reticulum (ER). All subunits are required for a maximal enzyme activity. The polypeptide is Dolichyl-diphosphooligosaccharide--protein glycosyltransferase subunit 4C (OST4C) (Arabidopsis thaliana (Mouse-ear cress)).